The following is a 151-amino-acid chain: D-aminoacyl-tRNA deacylase (151 aa).

The Gly-cisPro motif, important for rejection of L-amino acids motif lies at 137 to 138 (GP).

The protein belongs to the DTD family. As to quaternary structure, homodimer.

The protein resides in the cytoplasm. The catalysed reaction is glycyl-tRNA(Ala) + H2O = tRNA(Ala) + glycine + H(+). It catalyses the reaction a D-aminoacyl-tRNA + H2O = a tRNA + a D-alpha-amino acid + H(+). In terms of biological role, an aminoacyl-tRNA editing enzyme that deacylates mischarged D-aminoacyl-tRNAs. Also deacylates mischarged glycyl-tRNA(Ala), protecting cells against glycine mischarging by AlaRS. Acts via tRNA-based rather than protein-based catalysis; rejects L-amino acids rather than detecting D-amino acids in the active site. By recycling D-aminoacyl-tRNA to D-amino acids and free tRNA molecules, this enzyme counteracts the toxicity associated with the formation of D-aminoacyl-tRNA entities in vivo and helps enforce protein L-homochirality. This is D-aminoacyl-tRNA deacylase from Listeria monocytogenes serotype 4a (strain HCC23).